Consider the following 184-residue polypeptide: Probable RNA 2'-phosphotransferase (184 aa).

The protein belongs to the KptA/TPT1 family.

Functionally, removes the 2'-phosphate from RNA via an intermediate in which the phosphate is ADP-ribosylated by NAD followed by a presumed transesterification to release the RNA and generate ADP-ribose 1''-2''-cyclic phosphate (APPR&gt;P). May function as an ADP-ribosylase. This is Probable RNA 2'-phosphotransferase from Escherichia coli (strain K12 / MC4100 / BW2952).